The primary structure comprises 252 residues: MAGHSKFKNIQYRKGAQDKKRAKIFTKLIREIVTAAKTGSSNNPENNPRLRNALTAARSQNLPKERIDKAINSANDASNTENYMEIRYEGYAPSGIAIIVEALTDNKNRTAAEVRSSFTKYGGSLGETGSVNYLFKHCGVIQYLSNIVSSENILEAVMEVDVDDITSDDTIHTIYTDIENFSKVLEFLTGKYGIPEDSYIGWIPLNTIIIDDKEKAEKLLKLVEVLEESDDVQRVFSNYELSDDVYAIIQGA.

This sequence belongs to the TACO1 family.

The protein localises to the cytoplasm. This is Probable transcriptional regulatory protein A1E_02520 from Rickettsia canadensis (strain McKiel).